A 425-amino-acid polypeptide reads, in one-letter code: Protein UL117 (425 aa).

Residues 59 to 83 (PTTTSSSLAPPRDDERRPTPPLRPP) are disordered.

This sequence belongs to the herpesviridae U84 family.

Its subcellular location is the host nucleus. In terms of biological role, plays a role in the inhibition of host DNA replication in the infected cell. Targets the mini-chromosome maintenance (MCM) complex and blocks the accumulation of MCM proteins and their loading onto host chromatin. This chain is Protein UL117 (UL117), found in Homo sapiens (Human).